The following is a 317-amino-acid chain: Beta-ketoacyl-[acyl-carrier-protein] synthase III (317 aa).

Catalysis depends on residues C112 and H244. The tract at residues 245-249 is ACP-binding; the sequence is QANLR. The active site involves N274.

This sequence belongs to the thiolase-like superfamily. FabH family. Homodimer.

Its subcellular location is the cytoplasm. The enzyme catalyses malonyl-[ACP] + acetyl-CoA + H(+) = 3-oxobutanoyl-[ACP] + CO2 + CoA. The protein operates within lipid metabolism; fatty acid biosynthesis. Its function is as follows. Catalyzes the condensation reaction of fatty acid synthesis by the addition to an acyl acceptor of two carbons from malonyl-ACP. Catalyzes the first condensation reaction which initiates fatty acid synthesis and may therefore play a role in governing the total rate of fatty acid production. Possesses both acetoacetyl-ACP synthase and acetyl transacylase activities. Its substrate specificity determines the biosynthesis of branched-chain and/or straight-chain of fatty acids. This chain is Beta-ketoacyl-[acyl-carrier-protein] synthase III, found in Aliivibrio fischeri (strain ATCC 700601 / ES114) (Vibrio fischeri).